Here is a 1485-residue protein sequence, read N- to C-terminus: DNA topoisomerase 2 (1485 aa).

The span at 1-16 (MSIDADFSDYEDEASG) shows a compositional bias: acidic residues. The segment at 1–76 (MSIDADFSDY…NGNGNSNVST (76 aa)) is disordered. The segment covering 46 to 59 (DLRQTSLTSMTASE) has biased composition (polar residues). Positions 64 to 76 (VTNNGNGNSNVST) are enriched in low complexity. Residues asparagine 136, asparagine 165, 193-195 (SSN), and 206-213 (GRNGYGAK) each bind ATP. The segment at 388–392 (KKENK) is interaction with DNA. Position 421–423 (421–423 (QTK)) interacts with ATP. The Toprim domain maps to 499 to 613 (CVLILTEGDS…SLLQIPGFLI (115 aa)). Residues glutamate 505, aspartate 582, and aspartate 584 each contribute to the Mg(2+) site. Positions 745–1195 (IPSVVDGLKP…TPKELWLHDL (451 aa)) constitute a Topo IIA-type catalytic domain. Tyrosine 835 acts as the O-(5'-phospho-DNA)-tyrosine intermediate in catalysis. The interval 1019–1028 (KLSRTQATSN) is interaction with DNA. A compositionally biased stretch (basic and acidic residues) spans 1216 to 1225 (EEQSSRDFVN). Positions 1216 to 1485 (EEQSSRDFVN…EDVDDYDESD (270 aa)) are disordered. Residues 1226-1242 (RTKKKPRGKSTGTRKPR) are compositionally biased toward basic residues. Over residues 1260-1273 (ESKPSTTNRKQQTL) the composition is skewed to polar residues. The segment covering 1278-1307 (ASKEPEKSSDINIVKTEDNSHGLSVEENRI) has biased composition (basic and acidic residues). Phosphoserine is present on residues serine 1310 and serine 1345. Residues 1387 to 1396 (AKNKGKKASS) show a composition bias toward basic residues. A compositionally biased stretch (polar residues) spans 1413 to 1425 (GSSSTPKASSTNA). Phosphoserine is present on serine 1433. Acidic residues predominate over residues 1473-1485 (DNDEDVDDYDESD).

Belongs to the type II topoisomerase family. As to quaternary structure, homodimer. It depends on Mg(2+) as a cofactor. The cofactor is Mn(2+). Requires Ca(2+) as cofactor. Phosphorylated at multiple sites at both extremities of the protein.

The protein resides in the nucleus. It carries out the reaction ATP-dependent breakage, passage and rejoining of double-stranded DNA.. Functionally, control of topological states of DNA by transient breakage and subsequent rejoining of DNA strands. Topoisomerase II makes double-strand breaks. This chain is DNA topoisomerase 2 (top2), found in Schizosaccharomyces pombe (strain 972 / ATCC 24843) (Fission yeast).